The primary structure comprises 878 residues: Phosphoenolpyruvate carboxylase (878 aa).

Active-site residues include H138 and K545.

This sequence belongs to the PEPCase type 1 family. The cofactor is Mg(2+).

It carries out the reaction oxaloacetate + phosphate = phosphoenolpyruvate + hydrogencarbonate. Forms oxaloacetate, a four-carbon dicarboxylic acid source for the tricarboxylic acid cycle. The sequence is that of Phosphoenolpyruvate carboxylase from Shewanella sediminis (strain HAW-EB3).